A 496-amino-acid polypeptide reads, in one-letter code: Iroquois-class homeodomain protein irx-4-A (496 aa).

Positions 141-203 (GSSRRKNATR…NARRRLKKEN (63 aa)) form a DNA-binding region, homeobox; TALE-type. Residues 203 to 246 (NKMTWPPRNKCSDEKRPYDEEEEEEEEEEDSQKATIKNEKKTVD) are disordered. Over residues 221–232 (DEEEEEEEEEED) the composition is skewed to acidic residues.

It belongs to the TALE/IRO homeobox family. Expressed in the neural plate in overlapping patterns with other irx members, which all share an anterior border of expression. At stage 20, expressed in a subset of cells in the developing hindbrain with expression appearing above the otic vesicle by stage 26. Expression in retina cells begins at stage 28, continuing at later stages and is limited to a subset of retinal cells of the optic cup. Also expressed in the ventricle of the heart from stage 36 (late tailbud) onwards. Only expressed in the pronephros at tadpole stage.

The protein resides in the nucleus. In terms of biological role, acts partially redundantly with other irx members in neural patterning. Required for formation of the posterior forebrain, midbrain, hindbrain, and to a lesser extent, spinal cord. Patterns the neuroectoderm in both the anterior/posterior and dorsal/ventral axes. Does not appear to play a role in pronephros kidney development. The polypeptide is Iroquois-class homeodomain protein irx-4-A (irx4-a) (Xenopus laevis (African clawed frog)).